Reading from the N-terminus, the 103-residue chain is Iron-sulfur cluster assembly protein CyaY (103 aa).

Belongs to the frataxin family.

Its function is as follows. Involved in iron-sulfur (Fe-S) cluster assembly. May act as a regulator of Fe-S biogenesis. This chain is Iron-sulfur cluster assembly protein CyaY, found in Rickettsia peacockii (strain Rustic).